A 250-amino-acid polypeptide reads, in one-letter code: uncharacterized protein (250 aa).

This is an uncharacterized protein from Rickettsia prowazekii (strain Madrid E).